The chain runs to 600 residues: Pyranose dehydrogenase 3 (600 aa).

A signal peptide spans 1–25 (MLPRVARLNTHLVSLALLGFQITYG). Asn-99 and Asn-114 each carry an N-linked (GlcNAc...) asparagine glycan. His-127 is modified (tele-8alpha-FAD histidine). Asn-173, Asn-199, Asn-275, Asn-342, Asn-399, and Asn-507 each carry an N-linked (GlcNAc...) asparagine glycan. His-535 (proton acceptor) is an active-site residue. The N-linked (GlcNAc...) asparagine glycan is linked to Asn-546. Residue His-579 is part of the active site.

This sequence belongs to the GMC oxidoreductase family. In terms of assembly, monomer. It depends on FAD as a cofactor. In terms of processing, N-glycosylated.

It is found in the secreted. The catalysed reaction is pyranose + acceptor = pyranos-2-ulose + reduced acceptor.. The enzyme catalyses pyranose + acceptor = pyranos-3-ulose + reduced acceptor.. It carries out the reaction pyranose + acceptor = pyranos-2,3-diulose + reduced acceptor.. It catalyses the reaction a pyranoside + acceptor = a pyranosid-3-ulose + reduced acceptor.. The catalysed reaction is a pyranoside + acceptor = a pyranosid-3,4-diulose + reduced acceptor.. Its function is as follows. Catalyzes the single-oxidation or sequential double oxidation reaction of carbohydrates primarily at carbon-2 and/or carbon-3 with the concomitant reduction of the flavin. The enzyme exhibits a broad sugar substrate specificity, oxidizing different aldopyranoses to the corresponding C-1, C-2, C-3 or C-1,2, C-2,3 and C-3,4 (di)dehydro sugars with substrate-specific regioselectivity. Accepts only a narrow range of electron acceptors such as substituted benzoquinones and complexed metal ions and reacts extremely slowly with O(2) as acceptor. May play a role in the natural recycling of plant matter by oxidizing all major monosaccharides in lignocellulose and by reducing quinone compounds or reactive radical species generated during lignin depolymerization. This chain is Pyranose dehydrogenase 3, found in Leucoagaricus meleagris (Western flat-topped agaric).